The chain runs to 168 residues: Photosystem I assembly protein Ycf3 (168 aa).

TPR repeat units follow at residues 29–62 (AFSY…EEDP), 66–99 (SYTL…NANL), and 117–150 (AQSL…APDN).

This sequence belongs to the Ycf3 family.

It localises to the plastid. The protein localises to the chloroplast thylakoid membrane. Its function is as follows. Essential for the assembly of the photosystem I (PSI) complex. May act as a chaperone-like factor to guide the assembly of the PSI subunits. This chain is Photosystem I assembly protein Ycf3, found in Phaeodactylum tricornutum (strain CCAP 1055/1).